We begin with the raw amino-acid sequence, 89 residues long: Signal recognition particle 19 kDa protein (89 aa).

This sequence belongs to the SRP19 family. In terms of assembly, part of the signal recognition particle protein translocation system, which is composed of SRP and FtsY. Archaeal SRP consists of a 7S RNA molecule of 300 nucleotides and two protein subunits: SRP54 and SRP19.

The protein resides in the cytoplasm. Functionally, involved in targeting and insertion of nascent membrane proteins into the cytoplasmic membrane. Binds directly to 7S RNA and mediates binding of the 54 kDa subunit of the SRP. The protein is Signal recognition particle 19 kDa protein of Methanococcus vannielii (strain ATCC 35089 / DSM 1224 / JCM 13029 / OCM 148 / SB).